Here is a 210-residue protein sequence, read N- to C-terminus: Cilia- and flagella-associated protein 418 (210 aa).

Residues M1 to N77 are required for interaction with FAM161A. Positions L24 to F59 are disordered. Basic and acidic residues predominate over residues S41 to F59.

Interacts (via N-terminus) with FAM161A (via central region); the interaction is direct.

The protein localises to the cytoplasm. It localises to the photoreceptor inner segment. Its function is as follows. May be involved in photoreceptor outer segment disk morphogenesis. The chain is Cilia- and flagella-associated protein 418 from Rattus norvegicus (Rat).